Reading from the N-terminus, the 243-residue chain is Probable 2-phosphosulfolactate phosphatase (243 aa).

The protein belongs to the ComB family. Requires Mg(2+) as cofactor.

The catalysed reaction is (2R)-O-phospho-3-sulfolactate + H2O = (2R)-3-sulfolactate + phosphate. The chain is Probable 2-phosphosulfolactate phosphatase from Prochlorococcus marinus (strain SARG / CCMP1375 / SS120).